Here is a 118-residue protein sequence, read N- to C-terminus: MKAISPVRSMSSCYQAVCCLSEQSLSIARGSSHKGPGVDEPMGLLYDMNGCYSKLKELVPGIPQGSKLSQVEILQHVIDYIFDLQIVLGEDQQQNSILNLQKSDFSELATQGDASVCH.

Positions 32–84 (SHKGPGVDEPMGLLYDMNGCYSKLKELVPGIPQGSKLSQVEILQHVIDYIFDL) constitute a bHLH domain.

Homodimer. Heterodimer with other HLH proteins. Interacts (via HLH domain) with the bHLH protein hes4/hairy2 (via Orange domain). Interacts with stat3.

It is found in the nucleus. Functionally, transcriptional regulator (lacking a basic DNA binding domain) which negatively regulates the basic helix-loop-helix (bHLH) transcription factors by forming heterodimers and inhibiting their DNA binding and transcriptional activity. Influences cell fate decisions in the embryo by sequestering and blocking the activity of the bHLH transcription factors that control these decisions. Inhibits the binding of myogenic bHLH-containing complexes to E-box DNA, thereby preventing activation of muscle-specific target genes. Also inhibits the activity of neurogenic factor neurod1/neuroD. Plays a role in cell cycle progression and survival of neural crest progenitors; binding to either hes4-B/hairy2b or stat3 blocks the formation of transcription factor complexes and the repressor function of hes4-B/hairy2B, to allow neural crest progenitors to differentiate. May play a role in the regulation of the circadian rhythm. This chain is DNA-binding protein inhibitor ID-3 (id3), found in Xenopus tropicalis (Western clawed frog).